A 138-amino-acid polypeptide reads, in one-letter code: MAALPDKDKLLRNFSRCANWEEKYLYIIELGQRLAPLSPEEHSVQNIIQGCQSQVWIVMDQDPTGVIALRGDSDAAIVKGLIAVVFILYDRMTAQDITEFDVRPWFEKMALTQHLTPSRSQGLEAMIRAIRAKAANIS.

Cys51 acts as the Cysteine persulfide intermediate in catalysis.

This sequence belongs to the SufE family. Homodimer. Interacts with SufS.

The protein localises to the cytoplasm. Its pathway is cofactor biosynthesis; iron-sulfur cluster biosynthesis. Functionally, participates in cysteine desulfuration mediated by SufS. Cysteine desulfuration mobilizes sulfur from L-cysteine to yield L-alanine and constitutes an essential step in sulfur metabolism for biosynthesis of a variety of sulfur-containing biomolecules. Functions as a sulfur acceptor for SufS, by mediating the direct transfer of the sulfur atom from the S-sulfanylcysteine of SufS, an intermediate product of cysteine desulfuration process. This is Cysteine desulfuration protein SufE from Klebsiella pneumoniae subsp. pneumoniae (strain ATCC 700721 / MGH 78578).